The following is a 307-amino-acid chain: Small ribosomal subunit biogenesis GTPase RsgA (307 aa).

The 159-residue stretch at 82-240 (GRYGERIVVA…IADTPGLREV (159 aa)) folds into the CP-type G domain. Residues 131-134 (NKAD) and 182-190 (GPSGVGKSS) each bind GTP. Positions 264, 269, 271, and 277 each coordinate Zn(2+).

Belongs to the TRAFAC class YlqF/YawG GTPase family. RsgA subfamily. In terms of assembly, monomer. Associates with 30S ribosomal subunit, binds 16S rRNA. Zn(2+) is required as a cofactor.

The protein localises to the cytoplasm. In terms of biological role, one of several proteins that assist in the late maturation steps of the functional core of the 30S ribosomal subunit. Helps release RbfA from mature subunits. May play a role in the assembly of ribosomal proteins into the subunit. Circularly permuted GTPase that catalyzes slow GTP hydrolysis, GTPase activity is stimulated by the 30S ribosomal subunit. This Gemmatimonas aurantiaca (strain DSM 14586 / JCM 11422 / NBRC 100505 / T-27) protein is Small ribosomal subunit biogenesis GTPase RsgA.